Reading from the N-terminus, the 587-residue chain is MAKVADKPFFPKPFLSFLVLSIIFGFGITLSEAGFPKIKHYKWDVEYMFWSPDCVENIVMGINGEFPGPTIRANAGDIVVVELTNKLHTEGVVIHWHGILQRGTPWADGTASISQCAINPGETFTYRFVVDKAGTYFYHGHLGMQRSAGLYGSLIVDPPEGRSEPFHYDEEINLLLSDWWHQSVHKQEVGLSSKPMRWIGEPQSILINGKGQFDCSIAAKYNQGLKQCELSGKEKCAPFILHVQPKKTYRIRIASTTALASLNFAIGNHELLVVEADGNYVQPFVTSDIDIYSGESYSVLITTDQNPLENYWVSIGVRARLPKTPPGLTLLNYLPNSASKLPISPPPETPHWEDFDRSKNFTFRIFAAMGSPKPPVRYNRRLFLLNTQNRINGFMKWAINNVSLALPPTPYLAAMKMRLNTAFNQNPPPETFPLNYDINNPPPNPETTTGNGVYKFNMGETVDVILQNANMLNPNMSEIHPWHLHGHDFWVLGYGEGKFYAPEDEKKLNLKNPPLRNTVVIFPYGWTAIRFVADNPGVWAFHCHIEPHLHMGMGVVFAEGVHMVGMIPPKALACGSTALVKNYPRLP.

Positions 1–33 (MAKVADKPFFPKPFLSFLVLSIIFGFGITLSEA) are cleaved as a signal peptide. Plastocyanin-like domains are found at residues 38 to 157 (IKHY…LIVD) and 169 to 335 (DEEI…NYLP). 3 cysteine pairs are disulfide-bonded: Cys54–Cys236, Cys116–Cys574, and Cys215–Cys228. Positions 95, 97, 139, and 141 each coordinate Cu cation. N-linked (GlcNAc...) asparagine glycosylation is found at Asn360, Asn401, and Asn475. The 181-residue stretch at 379–559 (NRRLFLLNTQ…HMGMGVVFAE (181 aa)) folds into the Plastocyanin-like 3 domain. Residues His480, His483, His485, His542, Cys543, His544, His548, and Met553 each contribute to the Cu cation site.

The protein belongs to the multicopper oxidase family. In terms of assembly, dimer. The cofactor is Cu cation.

The protein localises to the secreted. It catalyses the reaction 4 L-ascorbate + O2 = 4 monodehydro-L-ascorbate radical + 2 H2O. Functionally, may be involved in a redox system involving ascorbic acid. The sequence is that of L-ascorbate oxidase from Cucumis sativus (Cucumber).